A 530-amino-acid chain; its full sequence is Vesicular acetylcholine transporter (530 aa).

The Cytoplasmic segment spans residues 1 to 33 (MEPTAPTGQARAAATKLSEAVGAALQEPQRQRR). Residues 34-54 (LVLVIVCVALLLDNMLYMVIV) form a helical membrane-spanning segment. Topologically, residues 55–125 (PIVPDYIAHM…PTESEDVKIG (71 aa)) are lumenal, vesicle. N-linked (GlcNAc...) asparagine glycosylation is found at N89 and N96. A helical transmembrane segment spans residues 126 to 146 (VLFASKAILQLLVNPLSGPFI). At 147–152 (DRMSYD) the chain is on the cytoplasmic side. A helical transmembrane segment spans residues 153-173 (VPLLIGLGVMFASTVMFAFAE). Topologically, residues 174 to 182 (DYATLFAAR) are lumenal, vesicle. The chain crosses the membrane as a helical span at residues 183–203 (SLQGLGSAFADTSGIAMIADK). The Cytoplasmic portion of the chain corresponds to 204–213 (YPEEPERSRA). The chain crosses the membrane as a helical span at residues 214–234 (LGVALAFISFGSLVAPPFGGI). Over 235 to 242 (LYEFAGKR) the chain is Lumenal, vesicle. Residues 243-263 (VPFLVLAAVSLFDALLLLAVA) traverse the membrane as a helical segment. Residues 264–289 (KPFSAAARARANLPVGTPIHRLMLDP) are Cytoplasmic-facing. A helical membrane pass occupies residues 290-310 (YIAVVAGALTTCNIPLAFLEP). Residues 311–325 (TIATWMKHTMAASEW) are Lumenal, vesicle-facing. Residues 326 to 346 (EMGMVWLPAFVPHVLGVYLTV) traverse the membrane as a helical segment. Residues 347–356 (RLAARYPHLQ) are Cytoplasmic-facing. The chain crosses the membrane as a helical span at residues 357–377 (WLYGALGLAVIGVSSCVVPAC). The Lumenal, vesicle segment spans residues 378-388 (RSFAPLVVSLC). The helical transmembrane segment at 389 to 409 (GLCFGIALVDTALLPTLAFLV) threads the bilayer. The Cytoplasmic portion of the chain corresponds to 410–422 (DVRHVSVYGSVYA). Residues 423 to 443 (IADISYSVAYALGPIVAGHIV) traverse the membrane as a helical segment. Residues 444–447 (HSLG) are Lumenal, vesicle-facing. Residues 448–468 (FEQLSLGMGLANLLYAPVLLL) form a helical membrane-spanning segment. The Cytoplasmic portion of the chain corresponds to 469 to 530 (LRNVGLLTRS…EDDYNYYSRS (62 aa)). Residues 471-530 (NVGLLTRSRSERDVLLDEPPQGLYDAVRLREVQGKDGGEPCSPPGPFDGCEDDYNYYSRS) form a mediates interaction with SEC14L1 region. The segment at 504–530 (GKDGGEPCSPPGPFDGCEDDYNYYSRS) is disordered.

The protein belongs to the major facilitator superfamily. Vesicular transporter family. In terms of assembly, interacts with SEC14L1. In terms of tissue distribution, high expression in all major cholinergic cell groups, including peripheral postganglionic parasympathetic cells, preganglionic sympathetic and parasympathetic cells, ventral spinal cord and brainstem motoneurons, cell groups in the basal forebrain, the habenula and the corpus striatum. Weakly expressed in the cortex and hippocampus.

It localises to the cytoplasmic vesicle. It is found in the secretory vesicle. The protein resides in the synaptic vesicle membrane. It carries out the reaction acetylcholine(out) + 2 H(+)(in) = acetylcholine(in) + 2 H(+)(out). The catalysed reaction is choline(in) + 2 H(+)(out) = choline(out) + 2 H(+)(in). It catalyses the reaction serotonin(in) + 2 H(+)(out) = serotonin(out) + 2 H(+)(in). Its activity is regulated as follows. Potently inhibited by L-vesamicol. Its function is as follows. Electrogenic antiporter that exchanges one cholinergic neurotransmitter, acetylcholine or choline, with two intravesicular protons across the membrane of synaptic vesicles. Uses the electrochemical proton gradient established by the V-type proton-pump ATPase to store neurotransmitters inside the vesicles prior to their release via exocytosis. Determines cholinergic vesicular quantal size at presynaptic nerve terminals in developing neuro-muscular junctions with an impact on motor neuron differentiation and innervation pattern. Part of forebrain cholinergic system, regulates hippocampal synapse transmissions that underlie spatial memory formation. Can transport serotonin. The chain is Vesicular acetylcholine transporter (Slc18a3) from Rattus norvegicus (Rat).